The following is a 108-amino-acid chain: Putative septation protein SpoVG (108 aa).

The segment at 84–108 (FEKQSSVETEPVTEENMETAENENE) is disordered. The span at 94–108 (PVTEENMETAENENE) shows a compositional bias: acidic residues.

This sequence belongs to the SpoVG family.

Functionally, could be involved in septation. The protein is Putative septation protein SpoVG of Finegoldia magna (strain ATCC 29328 / DSM 20472 / WAL 2508) (Peptostreptococcus magnus).